The sequence spans 673 residues: UvrABC system protein B (673 aa).

Positions 25–413 constitute a Helicase ATP-binding domain; sequence EGIESGLAHQ…GSDIAEQVVR (389 aa). Residue 38–45 coordinates ATP; that stretch reads GVTGSGKT. Positions 91–114 match the Beta-hairpin motif; the sequence is YYDYYQPEAYVPTTDTFIEKDASV. One can recognise a Helicase C-terminal domain in the interval 430–583; the sequence is QVDDLLSEIN…QHQYNLDNNI (154 aa). Residues 634-669 form the UVR domain; it reads DTKIVELEKLMQGHAQNLEFEQAAAMRDKIAKLRIQ.

The protein belongs to the UvrB family. As to quaternary structure, forms a heterotetramer with UvrA during the search for lesions. Interacts with UvrC in an incision complex.

The protein localises to the cytoplasm. Its function is as follows. The UvrABC repair system catalyzes the recognition and processing of DNA lesions. A damage recognition complex composed of 2 UvrA and 2 UvrB subunits scans DNA for abnormalities. Upon binding of the UvrA(2)B(2) complex to a putative damaged site, the DNA wraps around one UvrB monomer. DNA wrap is dependent on ATP binding by UvrB and probably causes local melting of the DNA helix, facilitating insertion of UvrB beta-hairpin between the DNA strands. Then UvrB probes one DNA strand for the presence of a lesion. If a lesion is found the UvrA subunits dissociate and the UvrB-DNA preincision complex is formed. This complex is subsequently bound by UvrC and the second UvrB is released. If no lesion is found, the DNA wraps around the other UvrB subunit that will check the other stand for damage. This Colwellia psychrerythraea (strain 34H / ATCC BAA-681) (Vibrio psychroerythus) protein is UvrABC system protein B.